Consider the following 362-residue polypeptide: Chorismate synthase (362 aa).

Position 47 (Arg-47) interacts with NADP(+). FMN contacts are provided by residues 124–126 (RSS), Gly-286, 301–305 (KPTAT), and Arg-327.

Belongs to the chorismate synthase family. In terms of assembly, homotetramer. The cofactor is FMNH2.

It carries out the reaction 5-O-(1-carboxyvinyl)-3-phosphoshikimate = chorismate + phosphate. It participates in metabolic intermediate biosynthesis; chorismate biosynthesis; chorismate from D-erythrose 4-phosphate and phosphoenolpyruvate: step 7/7. Catalyzes the anti-1,4-elimination of the C-3 phosphate and the C-6 proR hydrogen from 5-enolpyruvylshikimate-3-phosphate (EPSP) to yield chorismate, which is the branch point compound that serves as the starting substrate for the three terminal pathways of aromatic amino acid biosynthesis. This reaction introduces a second double bond into the aromatic ring system. This chain is Chorismate synthase, found in Rippkaea orientalis (strain PCC 8801 / RF-1) (Cyanothece sp. (strain PCC 8801)).